Here is a 310-residue protein sequence, read N- to C-terminus: tRNA dimethylallyltransferase (310 aa).

19–26 lines the ATP pocket; sequence GPTGTGKS. 21–26 serves as a coordination point for substrate; the sequence is TGTGKS.

Belongs to the IPP transferase family. In terms of assembly, monomer. It depends on Mg(2+) as a cofactor.

It carries out the reaction adenosine(37) in tRNA + dimethylallyl diphosphate = N(6)-dimethylallyladenosine(37) in tRNA + diphosphate. Its function is as follows. Catalyzes the transfer of a dimethylallyl group onto the adenine at position 37 in tRNAs that read codons beginning with uridine, leading to the formation of N6-(dimethylallyl)adenosine (i(6)A). The polypeptide is tRNA dimethylallyltransferase (Saccharopolyspora erythraea (strain ATCC 11635 / DSM 40517 / JCM 4748 / NBRC 13426 / NCIMB 8594 / NRRL 2338)).